The sequence spans 282 residues: Putative glycosyltransferase HI_0765 (282 aa).

It belongs to the glycosyltransferase 25 family.

This chain is Putative glycosyltransferase HI_0765, found in Haemophilus influenzae (strain ATCC 51907 / DSM 11121 / KW20 / Rd).